The primary structure comprises 271 residues: Tryptophan synthase alpha chain (271 aa).

Active-site proton acceptor residues include Glu-49 and Asp-60.

This sequence belongs to the TrpA family. As to quaternary structure, tetramer of two alpha and two beta chains.

The enzyme catalyses (1S,2R)-1-C-(indol-3-yl)glycerol 3-phosphate + L-serine = D-glyceraldehyde 3-phosphate + L-tryptophan + H2O. It participates in amino-acid biosynthesis; L-tryptophan biosynthesis; L-tryptophan from chorismate: step 5/5. The alpha subunit is responsible for the aldol cleavage of indoleglycerol phosphate to indole and glyceraldehyde 3-phosphate. In Burkholderia cenocepacia (strain ATCC BAA-245 / DSM 16553 / LMG 16656 / NCTC 13227 / J2315 / CF5610) (Burkholderia cepacia (strain J2315)), this protein is Tryptophan synthase alpha chain.